The sequence spans 586 residues: CTP synthase 2 (586 aa).

The region spanning 300–554 (SIALVGKYTK…LAATGNLNAY (255 aa)) is the Glutamine amidotransferase type-1 domain. Residues Cys399, His526, and Glu528 each act as for GATase activity in the active site. Residues 563–586 (SSDRYSDASDDSFSEPRIAELEIS) form a disordered region. A phosphoserine mark is found at Ser568, Ser571, and Ser574.

The protein belongs to the CTP synthase family.

The enzyme catalyses UTP + L-glutamine + ATP + H2O = CTP + L-glutamate + ADP + phosphate + 2 H(+). It functions in the pathway pyrimidine metabolism; CTP biosynthesis via de novo pathway; CTP from UDP: step 2/2. Its function is as follows. Catalyzes the ATP-dependent amination of UTP to CTP with either L-glutamine or ammonia as the source of nitrogen. Constitutes the rate-limiting enzyme in the synthesis of cytosine nucleotides. This is CTP synthase 2 (CTPS2) from Homo sapiens (Human).